A 277-amino-acid chain; its full sequence is Ribosomally synthesized cyclic peptide asperipin-2a precursor aprA (277 aa).

A signal peptide spans 1-19; sequence MHLSRYIAVLLSASSFVSA. 12 propeptides span residues 20 to 69, 76 to 88, 95 to 107, 114 to 126, 133 to 145, 152 to 164, 171 to 183, 190 to 202, 209 to 221, 228 to 240, 247 to 259, and 266 to 277; these read LPLQ…LDKR, KRNA…LDKR, and KRNAETPEDLDK.

In terms of processing, aprA is processed by kexin proteases to produce 11 identical copies of the hexapeptide Phe-Tyr-Tyr-Thr-Gly-Tyr, that is further modified aprY and aprR to yield asperipin-2a. The bicyclic structure of asperipin-2a is likely synthesized by the single ustYa family oxidase aprY. The reductase aprR may be required for the final reduction to yield asperipin-2a.

It participates in secondary metabolite biosynthesis. Its function is as follows. Ribosomally synthesized cyclic peptide asperipin-2a precursor; part of the gene cluster that mediates the biosynthesis of the asperipin-2a, a bicyclic peptide that possesses two macrocyclic ether rings consisting of 14- and 17-membered paracyclophans. The aprA translated product contains a 11-fold repeated peptide embedding the hexapeptide Phe-Tyr-Tyr-Thr-Gly-Tyr, that is converted into asperipin-2a. After being excised from the precursor peptide by kexin proteases, the core peptides are cyclized and modified post-translationally by enzymes encoded within the corresponding gene cluster. The chain is Ribosomally synthesized cyclic peptide asperipin-2a precursor aprA from Aspergillus flavus (strain ATCC 200026 / FGSC A1120 / IAM 13836 / NRRL 3357 / JCM 12722 / SRRC 167).